We begin with the raw amino-acid sequence, 371 residues long: Cytochrome b (371 aa).

The next 4 membrane-spanning stretches (helical) occupy residues phenylalanine 25–valine 45, tryptophan 69–isoleucine 90, tryptophan 105–leucine 125, and phenylalanine 170–isoleucine 190. Residues histidine 75 and histidine 89 each coordinate heme b. Residues histidine 174 and histidine 188 each coordinate heme b. Histidine 193 is an a ubiquinone binding site. 4 consecutive transmembrane segments (helical) span residues histidine 218–phenylalanine 238, leucine 280–histidine 300, leucine 312–threonine 332, and phenylalanine 339–proline 358.

The protein belongs to the cytochrome b family. The cytochrome bc1 complex contains 3 respiratory subunits (MT-CYB, CYC1 and UQCRFS1), 2 core proteins (UQCRC1 and UQCRC2) and probably 6 low-molecular weight proteins. The cofactor is heme b.

It is found in the mitochondrion inner membrane. Functionally, component of the ubiquinol-cytochrome c reductase complex (complex III or cytochrome b-c1 complex) that is part of the mitochondrial respiratory chain. The b-c1 complex mediates electron transfer from ubiquinol to cytochrome c. Contributes to the generation of a proton gradient across the mitochondrial membrane that is then used for ATP synthesis. The protein is Cytochrome b (MT-CYB) of Liasis olivaceus (Olive python).